The primary structure comprises 594 residues: DNA ligase 2 (594 aa).

Residue glutamate 250 participates in ATP binding. Lysine 252 serves as the catalytic N6-AMP-lysine intermediate. 6 residues coordinate ATP: arginine 257, arginine 273, glutamate 303, phenylalanine 343, arginine 419, and lysine 425.

This sequence belongs to the ATP-dependent DNA ligase family. It depends on Mg(2+) as a cofactor.

It catalyses the reaction ATP + (deoxyribonucleotide)n-3'-hydroxyl + 5'-phospho-(deoxyribonucleotide)m = (deoxyribonucleotide)n+m + AMP + diphosphate.. Its function is as follows. DNA ligase that seals nicks in double-stranded DNA during DNA replication, DNA recombination and DNA repair. The sequence is that of DNA ligase 2 from Korarchaeum cryptofilum (strain OPF8).